Consider the following 171-residue polypeptide: 3-hydroxydecanoyl-[acyl-carrier-protein] dehydratase (171 aa).

The active site involves His70.

This sequence belongs to the thioester dehydratase family. FabA subfamily. Homodimer.

The protein resides in the cytoplasm. The catalysed reaction is a (3R)-hydroxyacyl-[ACP] = a (2E)-enoyl-[ACP] + H2O. It catalyses the reaction (3R)-hydroxydecanoyl-[ACP] = (2E)-decenoyl-[ACP] + H2O. It carries out the reaction (2E)-decenoyl-[ACP] = (3Z)-decenoyl-[ACP]. It functions in the pathway lipid metabolism; fatty acid biosynthesis. In terms of biological role, necessary for the introduction of cis unsaturation into fatty acids. Catalyzes the dehydration of (3R)-3-hydroxydecanoyl-ACP to E-(2)-decenoyl-ACP and then its isomerization to Z-(3)-decenoyl-ACP. Can catalyze the dehydratase reaction for beta-hydroxyacyl-ACPs with saturated chain lengths up to 16:0, being most active on intermediate chain length. This chain is 3-hydroxydecanoyl-[acyl-carrier-protein] dehydratase, found in Methylococcus capsulatus (strain ATCC 33009 / NCIMB 11132 / Bath).